Reading from the N-terminus, the 167-residue chain is uncharacterized protein (167 aa).

The protein resides in the virion. This is an uncharacterized protein from Acanthamoeba polyphaga (Amoeba).